The following is a 196-amino-acid chain: Putative HTH-type transcriptional regulator protein PtxE (196 aa).

An HTH lysR-type domain is found at 1-59; the sequence is MLNPVWLKSLVAIVQTGSFQSAARALGLAQPTVSQHLQKLEEQVGVTLVQRSRSGCQPT. Positions 19–38 form a DNA-binding region, H-T-H motif; that stretch reads FQSAARALGLAQPTVSQHLQ.

This sequence belongs to the LysR transcriptional regulatory family.

This chain is Putative HTH-type transcriptional regulator protein PtxE (ptxE), found in Stutzerimonas stutzeri (Pseudomonas stutzeri).